Consider the following 207-residue polypeptide: SPRY domain-containing protein 4 (207 aa).

The region spanning 12–207 (YRWGTKRWGV…HSGLEVPKGL (196 aa)) is the B30.2/SPRY domain. K53 and K130 each carry N6-acetyllysine. Position 139 is an N6-succinyllysine (K139).

In Mus musculus (Mouse), this protein is SPRY domain-containing protein 4 (Spryd4).